The chain runs to 398 residues: NADH-ubiquinone oxidoreductase 49 kDa subunit (398 aa).

The protein belongs to the complex I 49 kDa subunit family.

It is found in the mitochondrion. The enzyme catalyses a ubiquinone + NADH + 5 H(+)(in) = a ubiquinol + NAD(+) + 4 H(+)(out). Core subunit of the mitochondrial membrane respiratory chain NADH dehydrogenase (Complex I) that is believed to belong to the minimal assembly required for catalysis. Complex I functions in the transfer of electrons from NADH to the respiratory chain. The immediate electron acceptor for the enzyme is believed to be ubiquinone. Component of the iron-sulfur (IP) fragment of the enzyme. Component of the iron-sulfur (IP) fragment of the enzyme. In Cafeteria roenbergensis (Marine flagellate), this protein is NADH-ubiquinone oxidoreductase 49 kDa subunit (NAD7).